A 221-amino-acid polypeptide reads, in one-letter code: MTVAPFDAKALAQGLEQGAQALRLELTAVQQQQLLQHLALIDRWNRVYNLTAVREPAQMLTQHLLDSLAVVAPLRRQTRATAIALLDVGSGAGLPGVAIAVACPEIHVSCVDTVSKKASFIRQVGVELGLTHFQALHARVESLASSNFDVITSRAFASLADFVTLTEAALAPDGVWMAMKGQVPHEEMAVLPSSIEVFHVEPLQVPGLDAERCIVWMHRKG.

Residues Gly-89, Leu-94, Val-140–Glu-141, and Arg-154 contribute to the S-adenosyl-L-methionine site.

This sequence belongs to the methyltransferase superfamily. RNA methyltransferase RsmG family.

It localises to the cytoplasm. The catalysed reaction is guanosine(527) in 16S rRNA + S-adenosyl-L-methionine = N(7)-methylguanosine(527) in 16S rRNA + S-adenosyl-L-homocysteine. In terms of biological role, specifically methylates the N7 position of guanine in position 527 of 16S rRNA. In Methylibium petroleiphilum (strain ATCC BAA-1232 / LMG 22953 / PM1), this protein is Ribosomal RNA small subunit methyltransferase G.